A 454-amino-acid polypeptide reads, in one-letter code: Glutamate mutase epsilon subunit (454 aa).

Arginine 67 contributes to the L-glutamate binding site. An adenosylcob(III)alamin-binding site is contributed by glycine 69. An L-glutamate-binding site is contributed by arginine 99. Asparagine 122 is a binding site for adenosylcob(III)alamin. L-glutamate-binding positions include 148-149 (RH), glutamate 170, and tyrosine 176. Proline 179 serves as a coordination point for adenosylcob(III)alamin. Tyrosine 180 serves as a coordination point for L-glutamate. The adenosylcob(III)alamin site is built by phenylalanine 296, lysine 325, glutamate 329, and isoleucine 333.

This sequence belongs to the methylaspartate mutase GlmE subunit family. Heterotetramer composed of 2 epsilon subunits (GlmE) and 2 sigma subunits (GlmS). GlmE exists as a homodimer and GlmS as a monomer. Adenosylcob(III)alamin is required as a cofactor.

It catalyses the reaction (2S,3S)-3-methyl-L-aspartate = L-glutamate. It participates in amino-acid degradation; L-glutamate degradation via mesaconate pathway; acetate and pyruvate from L-glutamate: step 1/4. In terms of biological role, catalyzes the carbon skeleton rearrangement of L-glutamate to L-threo-3-methylaspartate ((2S,3S)-3-methylaspartate). In Shigella dysenteriae serotype 1 (strain Sd197), this protein is Glutamate mutase epsilon subunit.